Here is a 305-residue protein sequence, read N- to C-terminus: MLNFSDRLIESIKKKNSVLIAGIDTSIENVPDYFIKRFYDREKSEIDNLKTILFEYNRRIIDAVEENVVGVKFQAAFFEQYSYHGFEVLHKLCEYAKNKKLVVIFDGKRNDISSSAKGYSNAYLGETPVFGRKIRFFEFDAITTNPYLGQDGIKPFVEDCERFKKGLFVLVKTSNPSSADFQDLTVEDKYLFEVVAEKVYEWGKNCVGKEGYSDIGAVVGATQKEAAKRIREILPNSFLLVPGIGVQGGKVEDLKYFVDSNNMGIIVNSSRDIIYAYKNYVHSDFEKSSYLASKSIKESINAAIS.

Lys-108 functions as the Proton donor in the catalytic mechanism.

The protein belongs to the OMP decarboxylase family. Type 2 subfamily.

The enzyme catalyses orotidine 5'-phosphate + H(+) = UMP + CO2. It functions in the pathway pyrimidine metabolism; UMP biosynthesis via de novo pathway; UMP from orotate: step 2/2. The chain is Orotidine 5'-phosphate decarboxylase from Caldicellulosiruptor saccharolyticus (strain ATCC 43494 / DSM 8903 / Tp8T 6331).